Here is a 572-residue protein sequence, read N- to C-terminus: Hexokinase (572 aa).

The Hexokinase domain maps to 49 to 492 (DEPPISLETV…SGKGAALITA (444 aa)). Residues 105–237 (NGTEEGRFIA…DIKVEVVALI (133 aa)) form a hexokinase small subdomain region. Residues 116–120 (DLGGT) and Ser185 contribute to the D-glucose 6-phosphate site. 116 to 121 (DLGGTN) contributes to the ATP binding site. Substrate is bound by residues 185 to 186 (SY), 202 to 203 (TK), and 238 to 239 (ND). The hexokinase large subdomain stretch occupies residues 238-481 (NDTVGTMVAA…LKFKLLQTAD (244 aa)). Asp239 and Thr263 together coordinate D-glucose 6-phosphate. Thr263 contacts ATP. The substrate site is built by Asn266, Glu297, and Asp331. ATP-binding positions include 336 to 337 (GK), 373 to 377 (TKYIS), and 448 to 452 (STYKY). Residues 446–448 (DGS) and Ser483 each bind D-glucose 6-phosphate.

This sequence belongs to the hexokinase family.

The enzyme catalyses a D-hexose + ATP = a D-hexose 6-phosphate + ADP + H(+). The catalysed reaction is D-mannose + ATP = D-mannose 6-phosphate + ADP + H(+). It catalyses the reaction D-fructose + ATP = D-fructose 6-phosphate + ADP + H(+). It carries out the reaction D-glucose + ATP = D-glucose 6-phosphate + ADP + H(+). It functions in the pathway carbohydrate metabolism; hexose metabolism. The protein operates within carbohydrate degradation; glycolysis; D-glyceraldehyde 3-phosphate and glycerone phosphate from D-glucose: step 1/4. With respect to regulation, activated by glucose-6-phosphate. Inhibited by N-acetylglucosamine, glucosamine, mannoheptulose and ADP. In terms of biological role, active against glucose, fructose, mannose, maltose and galactose. The protein is Hexokinase of Brugia malayi (Filarial nematode worm).